The sequence spans 438 residues: tRNA modification GTPase MnmE (438 aa).

(6S)-5-formyl-5,6,7,8-tetrahydrofolate is bound by residues arginine 21, glutamate 79, and lysine 118. A TrmE-type G domain is found at 215 to 362; that stretch reads GFSIVLIGAP…LEARIEQIVR (148 aa). Residue asparagine 225 participates in K(+) binding. Residues 225 to 230, 244 to 250, and 269 to 272 contribute to the GTP site; these read NAGKSS, TDIPGTT, and DTAG. Mg(2+) is bound at residue serine 229. 3 residues coordinate K(+): threonine 244, isoleucine 246, and threonine 249. Threonine 250 contacts Mg(2+). Residue lysine 438 participates in (6S)-5-formyl-5,6,7,8-tetrahydrofolate binding.

This sequence belongs to the TRAFAC class TrmE-Era-EngA-EngB-Septin-like GTPase superfamily. TrmE GTPase family. As to quaternary structure, homodimer. Heterotetramer of two MnmE and two MnmG subunits. K(+) is required as a cofactor.

The protein localises to the cytoplasm. Exhibits a very high intrinsic GTPase hydrolysis rate. Involved in the addition of a carboxymethylaminomethyl (cmnm) group at the wobble position (U34) of certain tRNAs, forming tRNA-cmnm(5)s(2)U34. In Maricaulis maris (strain MCS10) (Caulobacter maris), this protein is tRNA modification GTPase MnmE.